The primary structure comprises 236 residues: Phosphoribosylaminoimidazole-succinocarboxamide synthase (236 aa).

The protein belongs to the SAICAR synthetase family.

The catalysed reaction is 5-amino-1-(5-phospho-D-ribosyl)imidazole-4-carboxylate + L-aspartate + ATP = (2S)-2-[5-amino-1-(5-phospho-beta-D-ribosyl)imidazole-4-carboxamido]succinate + ADP + phosphate + 2 H(+). It functions in the pathway purine metabolism; IMP biosynthesis via de novo pathway; 5-amino-1-(5-phospho-D-ribosyl)imidazole-4-carboxamide from 5-amino-1-(5-phospho-D-ribosyl)imidazole-4-carboxylate: step 1/2. This Pelodictyon phaeoclathratiforme (strain DSM 5477 / BU-1) protein is Phosphoribosylaminoimidazole-succinocarboxamide synthase.